Reading from the N-terminus, the 1038-residue chain is Inner tegument protein (1038 aa).

Residues Trp545–Pro1038 form an interaction with large tegument protein region.

It belongs to the herpesviridae inner tegument protein family. Interacts (via C-terminus) with the large tegument protein/LTP (via N-terminus).

Its subcellular location is the virion tegument. The protein resides in the host cytoplasm. The protein localises to the host nucleus. It is found in the host Golgi apparatus. It localises to the host trans-Golgi network. Plays an essential role in cytoplasmic secondary envelopment during viral egress. Interacts with the capsid via the large tegument protein/LTP and participates in its transport to the host trans-Golgi network (TGN) where secondary envelopment occurs. Modulates tegumentation and capsid accumulation at the viral assembly complex. In Homo sapiens (Human), this protein is Inner tegument protein (21).